A 228-amino-acid chain; its full sequence is 7-cyano-7-deazaguanine synthase (228 aa).

7–17 (LSGGLDSSTAL) contributes to the ATP binding site. Zn(2+) contacts are provided by Cys190, Cys202, Cys205, and Cys208.

This sequence belongs to the QueC family. Zn(2+) serves as cofactor.

The enzyme catalyses 7-carboxy-7-deazaguanine + NH4(+) + ATP = 7-cyano-7-deazaguanine + ADP + phosphate + H2O + H(+). It functions in the pathway purine metabolism; 7-cyano-7-deazaguanine biosynthesis. Catalyzes the ATP-dependent conversion of 7-carboxy-7-deazaguanine (CDG) to 7-cyano-7-deazaguanine (preQ(0)). This Acaryochloris marina (strain MBIC 11017) protein is 7-cyano-7-deazaguanine synthase.